The chain runs to 354 residues: Methionine import ATP-binding protein MetN (354 aa).

Residues 8–250 (LDHIDITFRQ…PKEALTQKFI (243 aa)) enclose the ABC transporter domain. 42 to 49 (GYSGAGKS) is an ATP binding site.

Belongs to the ABC transporter superfamily. Methionine importer (TC 3.A.1.24) family. The complex is composed of two ATP-binding proteins (MetN), two transmembrane proteins (MetI) and a solute-binding protein (MetQ).

It is found in the cell membrane. It carries out the reaction L-methionine(out) + ATP + H2O = L-methionine(in) + ADP + phosphate + H(+). It catalyses the reaction D-methionine(out) + ATP + H2O = D-methionine(in) + ADP + phosphate + H(+). In terms of biological role, part of the ABC transporter complex MetNIQ involved in methionine import. Responsible for energy coupling to the transport system. The sequence is that of Methionine import ATP-binding protein MetN from Streptococcus pyogenes serotype M6 (strain ATCC BAA-946 / MGAS10394).